The chain runs to 244 residues: tRNA (guanine-N(7)-)-methyltransferase (244 aa).

A disordered region spans residues 1 to 24; sequence MTDSHVPHPESPAVEEGEERPHRR. 4 residues coordinate S-adenosyl-L-methionine: glutamate 74, glutamate 99, aspartate 126, and aspartate 149. Residue aspartate 149 is part of the active site. Residues lysine 153, aspartate 185, and 222-225 contribute to the substrate site; that span reads TKFE.

Belongs to the class I-like SAM-binding methyltransferase superfamily. TrmB family.

It carries out the reaction guanosine(46) in tRNA + S-adenosyl-L-methionine = N(7)-methylguanosine(46) in tRNA + S-adenosyl-L-homocysteine. It participates in tRNA modification; N(7)-methylguanine-tRNA biosynthesis. In terms of biological role, catalyzes the formation of N(7)-methylguanine at position 46 (m7G46) in tRNA. The polypeptide is tRNA (guanine-N(7)-)-methyltransferase (Pseudomonas syringae pv. syringae (strain B728a)).